The chain runs to 616 residues: Dihydroxy-acid dehydratase (616 aa).

Asp-81 provides a ligand contact to Mg(2+). Residue Cys-122 participates in [2Fe-2S] cluster binding. Positions 123 and 124 each coordinate Mg(2+). An N6-carboxylysine modification is found at Lys-124. Cys-195 contributes to the [2Fe-2S] cluster binding site. A Mg(2+)-binding site is contributed by Glu-491. The active-site Proton acceptor is the Ser-517.

It belongs to the IlvD/Edd family. As to quaternary structure, homodimer. [2Fe-2S] cluster is required as a cofactor. It depends on Mg(2+) as a cofactor.

The enzyme catalyses (2R)-2,3-dihydroxy-3-methylbutanoate = 3-methyl-2-oxobutanoate + H2O. The catalysed reaction is (2R,3R)-2,3-dihydroxy-3-methylpentanoate = (S)-3-methyl-2-oxopentanoate + H2O. Its pathway is amino-acid biosynthesis; L-isoleucine biosynthesis; L-isoleucine from 2-oxobutanoate: step 3/4. It participates in amino-acid biosynthesis; L-valine biosynthesis; L-valine from pyruvate: step 3/4. Its function is as follows. Functions in the biosynthesis of branched-chain amino acids. Catalyzes the dehydration of (2R,3R)-2,3-dihydroxy-3-methylpentanoate (2,3-dihydroxy-3-methylvalerate) into 2-oxo-3-methylpentanoate (2-oxo-3-methylvalerate) and of (2R)-2,3-dihydroxy-3-methylbutanoate (2,3-dihydroxyisovalerate) into 2-oxo-3-methylbutanoate (2-oxoisovalerate), the penultimate precursor to L-isoleucine and L-valine, respectively. The polypeptide is Dihydroxy-acid dehydratase (Salmonella paratyphi A (strain ATCC 9150 / SARB42)).